The primary structure comprises 90 residues: U7-theraphotoxin-Hhn1a 7 (90 aa).

An N-terminal signal peptide occupies residues 1–19; the sequence is MKTAIFTVVLALAVFAVLS. Positions 20 to 50 are excised as a propeptide; it reads FGWEANEKALSEGFTELIHEKEAASETEARE. Disulfide bonds link Cys-51–Cys-65, Cys-58–Cys-70, and Cys-64–Cys-81.

It belongs to the neurotoxin 10 (Hwtx-1) family. 13 (Hntx-13) subfamily. In terms of tissue distribution, expressed by the venom gland.

Its subcellular location is the secreted. In terms of biological role, ion channel inhibitor. This is U7-theraphotoxin-Hhn1a 7 from Cyriopagopus hainanus (Chinese bird spider).